Consider the following 487-residue polypeptide: MKPSTEWWRYLAPLAVIAIIALIPVPAGLESHTWLYFAVFTGVIVGLILEPVPGAVVAMVGISIIAILSPWLLFSPEQLAQPGFKFTAKSLSWAVSGFSNSVIWLIFAAFMFGTGYEKNGLGRRIALILVKKMGHRTLFLGYAVMFSELILAPVTPSNSARGAGIIYPIIRNLPPLYQLQPNDSSSRSIGSYIMWIGIVADCVTSAIFLTAMAPNLLLIGLMKSASHATLSWGDWFLGMLPLSILLVLLVPRLAYVLYPPVLKSGDQVPRWAETELQAMGPLCSREKRMLGLMVGALVLWIFGGDYIDAAMVGYSVVALMLLLRIISWDDIVSNKAAWNVFFWLASLITLATGLNNTGFISWFGKLLAGSLSGYSPTMVMVALIVVFYLLRYFFASATAYTSALAPMMIAAALAMPEIPLPVFCLMVGAAIGLGSILTPYATGPSPIYYGSGYLPTADYWRLGAIFGLIFLVLLVITGLLWMPVVLL.

A run of 14 helical transmembrane segments spans residues 10-30 (YLAPLAVIAIIALIPVPAGLE), 33-53 (TWLYFAVFTGVIVGLILEPVP), 54-74 (GAVVAMVGISIIAILSPWLLF), 93-113 (WAVSGFSNSVIWLIFAAFMFG), 137-157 (TLFLGYAVMFSELILAPVTPS), 189-209 (IGSYIMWIGIVADCVTSAIFL), 230-250 (LSWGDWFLGMLPLSILLVLLV), 292-312 (LMVGALVLWIFGGDYIDAAMV), 313-333 (GYSVVALMLLLRIISWDDIVS), 340-360 (VFFWLASLITLATGLNNTGFI), 370-390 (SLSGYSPTMVMVALIVVFYLL), 393-413 (FFASATAYTSALAPMMIAAAL), 418-438 (IPLPVFCLMVGAAIGLGSILT), and 465-485 (IFGLIFLVLLVITGLLWMPVV).

Belongs to the SLC13A/DASS transporter (TC 2.A.47) family. DIT1 subfamily.

The protein resides in the cell inner membrane. It carries out the reaction (2R,3R)-tartrate(out) + succinate(in) = (2R,3R)-tartrate(in) + succinate(out). Its function is as follows. Catalyzes the uptake of tartrate in exchange for intracellular succinate. Essential for anaerobic L-tartrate fermentation. This is L-tartrate/succinate antiporter (ttdT) from Shigella dysenteriae serotype 1 (strain Sd197).